Here is a 521-residue protein sequence, read N- to C-terminus: Cytochrome P450 monooxygenase ABA2 (521 aa).

The chain crosses the membrane as a helical span at residues 15–35 (AGHLGMAVTFTILVAFTIHVL). The N-linked (GlcNAc...) asparagine glycan is linked to Asn366. Cys458 contacts heme.

The protein belongs to the cytochrome P450 family. Requires heme as cofactor.

It localises to the membrane. It functions in the pathway hormone biosynthesis. In terms of biological role, cytochrome P450 monooxygenase involved in the biosynthesis of abscisic acid (ABA), a phytohormone that acts antagonistically toward salicylic acid (SA), jasmonic acid (JA) and ethylene (ETH) signaling, to impede plant defense responses. During pathogen-host interaction, ABA plays a dual role in disease severity by increasing plant susceptibility and accelerating pathogenesis in the fungus itself. The first step of the pathway catalyzes the reaction from farnesyl diphosphate to alpha-ionylideneethane performed by the alpha-ionylideneethane synthase ABA3 via a three-step reaction mechanism involving 2 neutral intermediates, beta-farnesene and allofarnesene. The cytochrome P450 monooxygenase ABA1 might then be involved in the conversion of alpha-ionylideneethane to alpha-ionylideneacetic acid. Alpha-ionylideneacetic acid is further converted to abscisic acid in 2 steps involving the cytochrome P450 monooxygenase ABA2 and the short-chain dehydrogenase/reductase ABA4, via the intermediates 1'-deoxy-ABA or 1',4'-trans-diol-ABA, depending on the order of action of these 2 enzymes. ABA2 is responsible for the hydroxylation of carbon atom C-1' and ABA4 might be involved in the oxidation of the C-4' carbon atom. The chain is Cytochrome P450 monooxygenase ABA2 from Pyricularia oryzae (strain 70-15 / ATCC MYA-4617 / FGSC 8958) (Rice blast fungus).